We begin with the raw amino-acid sequence, 208 residues long: Na(+)-translocating NADH-quinone reductase subunit D (208 aa).

Transmembrane regions (helical) follow at residues 42 to 62 (FVMAIAVTLVTGLSNLFVSLI), 72 to 92 (IIVQLAIIASLVIVVDQILKA), 103 to 123 (VFVGLIITNCIVMGRAEAFAM), 131 to 151 (FVDGIGNGLGYGSMLIIVAFF), and 178 to 198 (NGLFLLAPSAFFIIGFVIWGL).

The protein belongs to the NqrDE/RnfAE family. Composed of six subunits; NqrA, NqrB, NqrC, NqrD, NqrE and NqrF.

It localises to the cell inner membrane. The catalysed reaction is a ubiquinone + n Na(+)(in) + NADH + H(+) = a ubiquinol + n Na(+)(out) + NAD(+). In terms of biological role, NQR complex catalyzes the reduction of ubiquinone-1 to ubiquinol by two successive reactions, coupled with the transport of Na(+) ions from the cytoplasm to the periplasm. NqrA to NqrE are probably involved in the second step, the conversion of ubisemiquinone to ubiquinol. The polypeptide is Na(+)-translocating NADH-quinone reductase subunit D (Haemophilus influenzae (strain 86-028NP)).